The sequence spans 118 residues: Small ribosomal subunit protein uS13 (118 aa).

Positions 94 to 118 (SLPVRGQRSKTNARTRKGPRKAIKK) are disordered.

It belongs to the universal ribosomal protein uS13 family. In terms of assembly, part of the 30S ribosomal subunit. Forms a loose heterodimer with protein S19. Forms two bridges to the 50S subunit in the 70S ribosome.

Functionally, located at the top of the head of the 30S subunit, it contacts several helices of the 16S rRNA. In the 70S ribosome it contacts the 23S rRNA (bridge B1a) and protein L5 of the 50S subunit (bridge B1b), connecting the 2 subunits; these bridges are implicated in subunit movement. Contacts the tRNAs in the A and P-sites. The chain is Small ribosomal subunit protein uS13 from Psychromonas ingrahamii (strain DSM 17664 / CCUG 51855 / 37).